Consider the following 515-residue polypeptide: MLSIPEFYQGKNVLITGATGFMGKVLLEKLLRSCPNTKAVYVLVRHKAGQKPRERVAEMMSCKLFDKLRDEQPDCAQKVIAISSELTQPELDMSKEDQDTLIDCIDIVFHCAATVRFNESLRDAMQLNVIATRQLLYLAQKMKKLEVFIHVSTAYANCNRKQIEEVVYPPPVDPKKLIESLEWMDDSLVNDITPKLIGDRPNTYTYTKALAEYVVQQEGSKLNIAIVRPSIVGASWKEPFPGWIDNFNGPSGLFIAAGKGILRTMRASNNAVADLIPVDVVVNTTLAAAWYSGVNRPKNMLVYNCTTGGTNPFHWGEVEYHVISTFKRNPLEQAFRRPNVNLTSNHLLYHYWIAVSHKAPALLYDVYLRITGRSPRMMKTITRLHRAMMLLEYFTSNSWVWNNENTNMLMSQLSPEDKKVFNFDVRQLHWAEYMENYCMGTKKYVLNEEMSGLPAARKHLNKLRNIRYGFNTILVVLIWRVFIARSQMARNIWYFVVSMCFKFLSYFRASSTMRY.

At 1–465 (MLSIPEFYQG…ARKHLNKLRN (465 aa)) the chain is on the cytoplasmic side. A helical transmembrane segment spans residues 466-484 (IRYGFNTILVVLIWRVFIA). At 485 to 515 (RSQMARNIWYFVVSMCFKFLSYFRASSTMRY) the chain is on the peroxisomal side.

This sequence belongs to the fatty acyl-CoA reductase family.

It localises to the peroxisome membrane. The catalysed reaction is a long-chain fatty acyl-CoA + 2 NADPH + 2 H(+) = a long-chain primary fatty alcohol + 2 NADP(+) + CoA. It carries out the reaction hexadecanoyl-CoA + 2 NADPH + 2 H(+) = hexadecan-1-ol + 2 NADP(+) + CoA. It catalyses the reaction octadecanoyl-CoA + 2 NADPH + 2 H(+) = octadecan-1-ol + 2 NADP(+) + CoA. The enzyme catalyses (9Z)-octadecenoyl-CoA + 2 NADPH + 2 H(+) = (9Z)-octadecen-1-ol + 2 NADP(+) + CoA. The catalysed reaction is (9Z,12Z)-octadecadienoyl-CoA + 2 NADPH + 2 H(+) = (9Z,12Z)-octadecadien-1-ol + 2 NADP(+) + CoA. It carries out the reaction eicosanoyl-CoA + 2 NADPH + 2 H(+) = eicosan-1-ol + 2 NADP(+) + CoA. It catalyses the reaction 16-methylheptadecanoyl-CoA + 2 NADPH + 2 H(+) = 16-methylheptadecan-1-ol + 2 NADP(+) + CoA. The enzyme catalyses 18-methylnonadecanoyl-CoA + 2 NADPH + 2 H(+) = 18-methylnonadecan-1-ol + 2 NADP(+) + CoA. Functionally, catalyzes the reduction of saturated and unsaturated C16 or C18 fatty acyl-CoA to fatty alcohols. It plays an essential role in the production of ether lipids/plasmalogens which synthesis requires fatty alcohols. In parallel, it is also required for wax monoesters production since fatty alcohols also constitute a substrate for their synthesis. The polypeptide is Fatty acyl-CoA reductase 1 (far1) (Xenopus laevis (African clawed frog)).